Consider the following 141-residue polypeptide: D-aminoacyl-tRNA deacylase (141 aa).

The Gly-cisPro motif, important for rejection of L-amino acids motif lies at 133 to 134; sequence GP.

The protein belongs to the DTD family. As to quaternary structure, homodimer.

Its subcellular location is the cytoplasm. It carries out the reaction glycyl-tRNA(Ala) + H2O = tRNA(Ala) + glycine + H(+). It catalyses the reaction a D-aminoacyl-tRNA + H2O = a tRNA + a D-alpha-amino acid + H(+). Its function is as follows. An aminoacyl-tRNA editing enzyme that deacylates mischarged D-aminoacyl-tRNAs. Also deacylates mischarged glycyl-tRNA(Ala), protecting cells against glycine mischarging by AlaRS. Acts via tRNA-based rather than protein-based catalysis; rejects L-amino acids rather than detecting D-amino acids in the active site. By recycling D-aminoacyl-tRNA to D-amino acids and free tRNA molecules, this enzyme counteracts the toxicity associated with the formation of D-aminoacyl-tRNA entities in vivo and helps enforce protein L-homochirality. The chain is D-aminoacyl-tRNA deacylase from Beutenbergia cavernae (strain ATCC BAA-8 / DSM 12333 / CCUG 43141 / JCM 11478 / NBRC 16432 / NCIMB 13614 / HKI 0122).